A 170-amino-acid chain; its full sequence is Photosystem II extrinsic protein V (170 aa).

The N-terminal stretch at 1-33 is a signal peptide; the sequence is MASFFSTLRRSLNRLLIALPVLLGLMISTPAQA. 4 residues coordinate heme c: Cys70, Cys73, His74, and His125.

This sequence belongs to the cytochrome c family. PsbV subfamily. PSII is composed of 1 copy each of membrane proteins PsbA, PsbB, PsbC, PsbD, PsbE, PsbF, PsbH, PsbI, PsbJ, PsbK, PsbL, PsbM, PsbT, PsbX, PsbY, PsbZ, Psb30/Ycf12, peripheral proteins PsbO, CyanoQ (PsbQ), PsbU, PsbV and a large number of cofactors. It forms dimeric complexes. Heme c serves as cofactor.

The protein localises to the cellular thylakoid membrane. In terms of biological role, one of the extrinsic, lumenal subunits of photosystem II (PSII). PSII is a light-driven water plastoquinone oxidoreductase, using light energy to abstract electrons from H(2)O, generating a proton gradient subsequently used for ATP formation. The extrinsic proteins stabilize the structure of photosystem II oxygen-evolving complex (OEC), the ion environment of oxygen evolution and protect the OEC against heat-induced inactivation. Low-potential cytochrome c that plays a role in the OEC of PSII. In Synechococcus sp. (strain CC9311), this protein is Photosystem II extrinsic protein V.